Reading from the N-terminus, the 461-residue chain is D-phenylhydantoinase (461 aa).

Residues His59, His61, and Lys151 each coordinate a divalent metal cation. The residue at position 151 (Lys151) is an N6-carboxylysine. Position 156 (Tyr156) interacts with substrate. A divalent metal cation is bound by residues His182 and His239. Residue Ser286 coordinates substrate. Asp313 lines the a divalent metal cation pocket. Asn335 contributes to the substrate binding site.

It belongs to the metallo-dependent hydrolases superfamily. Hydantoinase/dihydropyrimidinase family. Homotetramer. The cofactor is a divalent metal cation. Carboxylation allows a single lysine to coordinate two divalent metal cations.

The enzyme catalyses D-5-phenylhydantoin + H2O = N-carbamoyl-D-phenylglycine + H(+). Its function is as follows. Catalyzes the stereospecific hydrolysis of the cyclic amide bond of D-hydantoin derivatives with an aromatic side chains at the 5'-position. Has no activity on dihydropyrimidines. The physiological function is unknown. The polypeptide is D-phenylhydantoinase (Escherichia coli O17:K52:H18 (strain UMN026 / ExPEC)).